A 152-amino-acid chain; its full sequence is MEDSGFNIKYAKLFIKRAEEDLEVAKVLLKTNHYPDSVYHSQQCVEKAVKAVLILNGIIFRRHVVSGVFRNVIYEMKIEDSWKEKLLNLIPKIESLEEHWVMPRYPEPYFGELWNPLEEYTKEDAEECLKDAENVLEVIKDFLKEKYGLKQI.

Residues 15-135 form the HEPN domain; sequence IKRAEEDLEV…EECLKDAENV (121 aa).

Its function is as follows. Putative toxin component of a putative type VII toxin-antitoxin (TA) system. Its cognate antitoxin might be MJ1305. The polypeptide is Putative toxin MJ1304 (Methanocaldococcus jannaschii (strain ATCC 43067 / DSM 2661 / JAL-1 / JCM 10045 / NBRC 100440) (Methanococcus jannaschii)).